The primary structure comprises 175 residues: Peptide deformylase (175 aa).

Residues cysteine 92 and histidine 134 each contribute to the Fe cation site. The active site involves glutamate 135. Residue histidine 138 coordinates Fe cation.

The protein belongs to the polypeptide deformylase family. It depends on Fe(2+) as a cofactor.

The enzyme catalyses N-terminal N-formyl-L-methionyl-[peptide] + H2O = N-terminal L-methionyl-[peptide] + formate. Removes the formyl group from the N-terminal Met of newly synthesized proteins. Requires at least a dipeptide for an efficient rate of reaction. N-terminal L-methionine is a prerequisite for activity but the enzyme has broad specificity at other positions. The chain is Peptide deformylase from Blochmanniella floridana.